Here is a 361-residue protein sequence, read N- to C-terminus: Queuine tRNA-ribosyltransferase (361 aa).

Asp92 (proton acceptor) is an active-site residue. Residues 92 to 96 (DSGGF), Asp146, Gln189, and Gly216 contribute to the substrate site. The segment at 247 to 253 (GVGKPVD) is RNA binding. Asp266 acts as the Nucleophile in catalysis. An RNA binding; important for wobble base 34 recognition region spans residues 271 to 275 (TRSGR). Zn(2+)-binding residues include Cys304, Cys306, Cys309, and His335.

Belongs to the queuine tRNA-ribosyltransferase family. In terms of assembly, homodimer. Within each dimer, one monomer is responsible for RNA recognition and catalysis, while the other monomer binds to the replacement base PreQ1. Zn(2+) is required as a cofactor.

The enzyme catalyses 7-aminomethyl-7-carbaguanine + guanosine(34) in tRNA = 7-aminomethyl-7-carbaguanosine(34) in tRNA + guanine. It functions in the pathway tRNA modification; tRNA-queuosine biosynthesis. Catalyzes the base-exchange of a guanine (G) residue with the queuine precursor 7-aminomethyl-7-deazaguanine (PreQ1) at position 34 (anticodon wobble position) in tRNAs with GU(N) anticodons (tRNA-Asp, -Asn, -His and -Tyr). Catalysis occurs through a double-displacement mechanism. The nucleophile active site attacks the C1' of nucleotide 34 to detach the guanine base from the RNA, forming a covalent enzyme-RNA intermediate. The proton acceptor active site deprotonates the incoming PreQ1, allowing a nucleophilic attack on the C1' of the ribose to form the product. After dissociation, two additional enzymatic reactions on the tRNA convert PreQ1 to queuine (Q), resulting in the hypermodified nucleoside queuosine (7-(((4,5-cis-dihydroxy-2-cyclopenten-1-yl)amino)methyl)-7-deazaguanosine). The chain is Queuine tRNA-ribosyltransferase from Rickettsia africae (strain ESF-5).